We begin with the raw amino-acid sequence, 521 residues long: 3,4-dihydroxyphenylacetaldehyde synthase (521 aa).

At Lys306 the chain carries N6-(pyridoxal phosphate)lysine.

This sequence belongs to the group II decarboxylase family. Pyridoxal 5'-phosphate serves as cofactor. In terms of tissue distribution, highly expressed in the cuticle and midgut. Low expression in the head and thorax.

The enzyme catalyses L-dopa + O2 + H2O + H(+) = 3,4-dihydroxyphenylacetaldehyde + H2O2 + NH4(+) + CO2. Catalyzes the decarboxylation-oxidative deamination of L-3,4-dihydroxyphenylalanine (L-DOPA) to 3,4-dihydroxylphenylacetaldehyde (DHPAA). Involved in cuticle development. Probably responsible for the protein cross-linking during the development of flexible cuticles. The chain is 3,4-dihydroxyphenylacetaldehyde synthase from Aedes aegypti (Yellowfever mosquito).